A 255-amino-acid chain; its full sequence is UPF0246 protein Cphy_1568 (255 aa).

Belongs to the UPF0246 family.

In Lachnoclostridium phytofermentans (strain ATCC 700394 / DSM 18823 / ISDg) (Clostridium phytofermentans), this protein is UPF0246 protein Cphy_1568.